The sequence spans 100 residues: MLEHILSLGAYLFCIGIFGLITSRNMVRALMCLELIFNAVNINLITFSNSFDTQQAKGEIFAIFIIAIAAAEAAIGLAIVLAIYRNKNSTRIDQFNLLKW.

The next 3 membrane-spanning stretches (helical) occupy residues 1–21 (MLEH…FGLI), 29–49 (ALMC…TFSN), and 60–80 (IFAI…LAIV).

The protein belongs to the complex I subunit 4L family. In terms of assembly, NDH is composed of at least 16 different subunits, 5 of which are encoded in the nucleus.

It is found in the plastid. It localises to the chloroplast thylakoid membrane. It carries out the reaction a plastoquinone + NADH + (n+1) H(+)(in) = a plastoquinol + NAD(+) + n H(+)(out). It catalyses the reaction a plastoquinone + NADPH + (n+1) H(+)(in) = a plastoquinol + NADP(+) + n H(+)(out). Its function is as follows. NDH shuttles electrons from NAD(P)H:plastoquinone, via FMN and iron-sulfur (Fe-S) centers, to quinones in the photosynthetic chain and possibly in a chloroplast respiratory chain. The immediate electron acceptor for the enzyme in this species is believed to be plastoquinone. Couples the redox reaction to proton translocation, and thus conserves the redox energy in a proton gradient. The protein is NAD(P)H-quinone oxidoreductase subunit 4L, chloroplastic of Physcomitrium patens (Spreading-leaved earth moss).